We begin with the raw amino-acid sequence, 428 residues long: L-lysine N6-monooxygenase MbtG (428 aa).

The first 20 residues, 1–20 (MSTLAILGAGAKAVAVAAKA), serve as a signal peptide directing secretion.

Belongs to the lysine N(6)-hydroxylase/L-ornithine N(5)-oxygenase family. Requires FAD as cofactor.

The enzyme catalyses L-lysine + NADPH + O2 = N(6)-hydroxy-L-lysine + NADP(+) + H2O. The protein operates within siderophore biosynthesis; mycobactin biosynthesis. Functionally, flavoprotein monooxygenase required for N-hydroxylation of the two acylated lysine residues during mycobactin assembly, thus producing the hydroxamate groups necessary for iron sequestration. Is also able, but less efficiently, to hydroxylate L-lysine (non acylated) in vitro. In Mycolicibacterium paratuberculosis (strain ATCC BAA-968 / K-10) (Mycobacterium paratuberculosis), this protein is L-lysine N6-monooxygenase MbtG (mbtG).